We begin with the raw amino-acid sequence, 1392 residues long: MRPLAKDTGMSVASVTLASALQVRGEALSEEEIWSLLSLAAERLLEDLRNDSSDYVVCPWSLLLSAAGGLSFQDHVSHIEAAPFKAPELLQGSNEEGQPDASQMHVYSLGMTLYWSAGFRVPPNQPLQLQEPVHSLLLAMCEDQPRRRQPLQAVLEACRIHQEEVAVYPAPASLHISRLVGLVLGTISEVERRVVEENACEQRNRSCSLRSRLHQADGESPGAPASDALQPRRVSERSAETQSSLERCTAHSRNSFVNSTFAGAGPCDCEESPWYGSEPMLLAEAESSQPATSSPRNFLQRKGKFSRPEFILLAGEAPVTLHLPGSIVTKKGKSYLALRDLCVVLLNGRCLEVKCDMESTAGAVFNAVMSFANLEETTYFGLAYVEGEEFFFLDKDTRLCKVAPEGWREQHPKGSVDTFTLFLRIRFFVGHYRLLRHSLTRHQFYLQLRKDILEERLYCNDETLLQLGVLALQAEFGSYPKEQVEGKAYFRIQDYIPARLIERMTAIRVQVEVSEMHRLSSAPWGEDAELEFLEIVQQLPEYGVLVHRVSPEKKRPEGKMALGVCTKGIIVYEVRGSRRIATSQFPWRETGMISTHRKKLTITSSTTGKKYTFVTNSSKTCKYLLGLCSSQHWFNAQTGSKHPSHRFTGQDKFAQIASLSSAHQTQANPITWIQKLSCSENELCVPRLQDATGGQLGTSMENKQGFKEPGKERIGSSPYTGGEQLHSIGLNQKPAQTVFGTAGHSMCAGSNCLGRRTQICCFDSVSGSQNSKRKGLFGEPNQDIVCVMLKRDPVHGFGFVINEGEDAEQTRSGIFISSLIPGGPAERAKKIKPGGKILALNHISLEGFTFSMAVRMIQNSPDDMELIISQPKGVCGTIHSEEKNSTASSGMFCTDILSNRCQGRQSPHIHDQDRSVRGTEMAQGAGSCPPSPLQTNTGEIYFVELVKEDGTLGFSVTGGINTSVPHGGIYVKSIIPGGPAAKEGQILQGDRLLQVDGVSLCGLTHKQAVQCLKGPGQVARLVLERRGPRAAPQCPSADDRMGDVHMAVSLVTARPGRPASSVSVTDGPKFEVKLKKNSRGLGFSFVQMERGNCIHTKSDLVRIKRLFPGQPAEEHGAIAAGDIILAVNGKPIEGLAFQEVLHLLRGAPEEVTLLLCRPPPGILPEMEPGWQTPELSGDQRLTMATCAGSEQSPSLDQEDNWRDSTSLDAGEGLSPGPESSYKDVRQVKGDREKERPWAKSWMHPMESHPHVCKLHPEPETPALATSLEKDMRQNCYSVCDIRRLGSLELDRDGADGATCFLPESSSLTVDYEEYLTLTSASAGQLPCEECLEADSETIPLPQFCSLGALLKSSLPEESQGSESDWEDLDEPVDRDEVLRWTRSARQPLAAEP.

The KIND domain occupies 15 to 197; that stretch reads VTLASALQVR…SEVERRVVEE (183 aa). The interval 211-246 is disordered; that stretch reads SRLHQADGESPGAPASDALQPRRVSERSAETQSSLE. The region spanning 342–642 is the FERM domain; the sequence is CVVLLNGRCL…WFNAQTGSKH (301 aa). Positions 775-861 constitute a PDZ 1 domain; it reads GLFGEPNQDI…MAVRMIQNSP (87 aa). A disordered region spans residues 903-930; the sequence is GRQSPHIHDQDRSVRGTEMAQGAGSCPP. Positions 908 to 917 are enriched in basic and acidic residues; that stretch reads HIHDQDRSVR. The segment at 937-1027 is interaction with GRIN2A and GRIN2B; the sequence is TGEIYFVELV…VARLVLERRG (91 aa). PDZ domains follow at residues 950-1035 and 1079-1167; these read GTLG…PQCP and RGLG…PEME. Residues 1186-1236 form a disordered region; that stretch reads CAGSEQSPSLDQEDNWRDSTSLDAGEGLSPGPESSYKDVRQVKGDREKERP. Positions 1220 to 1236 are enriched in basic and acidic residues; it reads SYKDVRQVKGDREKERP.

Interacts (via the second PDZ domain) with CTNND2 (via the extreme C-terminus). Interacts (via the second PDZ domain) with PKP4 (via the extreme C-terminus); the interaction directs FRMPD2 to the basolateral membranes. Interacts (via the second PDZ domain) with ARVCF (via the extreme C-terminus). Interacts (via the second PDZ domain) with NMDAR subunits GRIN2A/GLUN2A and GRIN2B/GLUN2B (via the extreme C-terminus); the interaction is direct and is likely to promote NMDAR-mediated neural signal transmission. Binds GRIN2A with lower affinity than GRIN2B. Interacts (via the third PDZ domain) with LRIT1 (via the extreme C-terminus); the interaction leads to their colocalization in photoreceptor synapses. Interacts with NOD2; the interaction is likely to trigger NOD2-mediated nuclear factor kappaB activation.

The protein resides in the cytoplasm. It is found in the postsynaptic density. The protein localises to the basolateral cell membrane. It localises to the cell junction. Its subcellular location is the tight junction. Functions as a scaffold protein and likely plays a role in N-methyl-D-aspartic acid receptor (NMDAR)-mediated synaptic excitatory transmission. May be involved in synapse formation in cone photoreceptor cells. May play a role in the regulation of tight junction formation. Binds phosphatidylinositol 3,4-bisphosphate (PtdIns(3,4)P2). May pNF-kappa-Blay a role in the regulation of NOD2-mediated NF-kappa-B activation in immune response. The chain is FERM and PDZ domain-containing protein 2 from Mus musculus (Mouse).